We begin with the raw amino-acid sequence, 305 residues long: MEKYEKLEKVGEGTYGKVYKALEKSTGQVVALKKTRLEMDEEGVPPTALREVSLLQMLSQSLYVVRLLSVEHVDCAKNGKPLLYLVFEYLDTDLKKFIDSHRKGPNPRPLPPQQIQSFLFQLCKGVSHCHAHGVLHRDLKPQNLLLDKDKGVLKIADLGLARAFTVPLKSYTHEIVTLSYRAPEVLLGSSHYSTAVDMSSVGCIFAEMVRRQALFPGDSEFQQLLHIFRLLGTPSDEQWPGVSSLRDWHVYPQWEPQNSAPAVPSLGPDGLDLLTKTLKYDPADRISAKAALDHPYFDTLDKSQF.

The Protein kinase domain maps to Tyr4–Phe297. ATP contacts are provided by residues Val10 to Val18 and Lys33. Residue Thr14 is modified to Phosphothreonine. Position 15 is a phosphotyrosine (Tyr15). Asp138 (proton acceptor) is an active-site residue. A Phosphothreonine; by CAK modification is found at Thr172.

It belongs to the protein kinase superfamily. CMGC Ser/Thr protein kinase family. CDC2/CDKX subfamily.

It carries out the reaction L-seryl-[protein] + ATP = O-phospho-L-seryl-[protein] + ADP + H(+). The catalysed reaction is L-threonyl-[protein] + ATP = O-phospho-L-threonyl-[protein] + ADP + H(+). The enzyme catalyses [DNA-directed RNA polymerase] + ATP = phospho-[DNA-directed RNA polymerase] + ADP + H(+). In terms of biological role, plays a key role in the control of the eukaryotic cell cycle. This is Cell division control protein 2 homolog C (CDC2C) from Antirrhinum majus (Garden snapdragon).